A 198-amino-acid polypeptide reads, in one-letter code: Recombination protein RecR (198 aa).

The segment at 58-73 adopts a C4-type zinc-finger fold; that stretch reads CSVCGNFTDTDPCAIC. Residues 81–175 form the Toprim domain; it reads DIICVVEQPK…KVTRIAAGIP (95 aa).

It belongs to the RecR family.

In terms of biological role, may play a role in DNA repair. It seems to be involved in an RecBC-independent recombinational process of DNA repair. It may act with RecF and RecO. The chain is Recombination protein RecR from Clostridium perfringens (strain ATCC 13124 / DSM 756 / JCM 1290 / NCIMB 6125 / NCTC 8237 / Type A).